The primary structure comprises 671 residues: ATP-dependent zinc metalloprotease FtsH (671 aa).

The Cytoplasmic portion of the chain corresponds to 1-22; it reads MANPNNNNDNKQNNNNNFFNDN. Residues 23–43 traverse the membrane as a helical segment; that stretch reads PLLAFAIFSIVIILIFKSFVG. Residues 44-130 are Periplasmic-facing; that stretch reads EGESLGTMMN…ISYEGVVGNG (87 aa). Residues 131 to 151 form a helical membrane-spanning segment; the sequence is FFSELISMMLPILIFFAIWIF. Residues 152–671 are Cytoplasmic-facing; sequence LAKKMSKGMG…SEESDNNKEA (520 aa). An ATP-binding site is contributed by 224–231; that stretch reads GPPGTGKT. Residue His447 participates in Zn(2+) binding. The active site involves Glu448. Residues His451 and Asp525 each coordinate Zn(2+). A disordered region spans residues 630 to 671; it reads EKGMPSRLAHKDKVAKNKAEADKKEEALKKEISEESDNNKEA.

This sequence in the central section; belongs to the AAA ATPase family. The protein in the C-terminal section; belongs to the peptidase M41 family. In terms of assembly, homohexamer. Zn(2+) is required as a cofactor.

It is found in the cell inner membrane. In terms of biological role, acts as a processive, ATP-dependent zinc metallopeptidase for both cytoplasmic and membrane proteins. Plays a role in the quality control of integral membrane proteins. In Sulfurovum sp. (strain NBC37-1), this protein is ATP-dependent zinc metalloprotease FtsH.